The sequence spans 367 residues: MSKRSWWAGSRKPPREMLKLSGSDSSQSMNGLEVAPPGLITNFSLATAEQCGQETPLENMLFASFYLLDFILALVGNTLALWLFIRDHKSGTPANVFLMHLAVADLSCVLVLPTRLVYHFSGNHWPFGEIACRLTGFLFYLNMYASIYFLTCISADRFLAIVHPVKSLKLRRPLYAHLACAFLWVVVAVAMAPLLVSPQTVQTNHTVVCLQLYREKASHHALVSLAVAFTFPFITTVTCYLLIIRSLRQGLRVEKRLKTKAVRMIAIVLAIFLVCFVPYHVNRSVYVLHYRSHGASCATQRILALANRITSCLTSLNGALDPIMYFFVAEKFRHALCNLLCGKRLKGPPPSFEGKTNESSLSAKSEL.

Residues 1–28 (MSKRSWWAGSRKPPREMLKLSGSDSSQS) are disordered. Residues 1-64 (MSKRSWWAGS…TPLENMLFAS (64 aa)) are Extracellular-facing. N-linked (GlcNAc...) asparagine glycosylation is present at Asn-42. A helical transmembrane segment spans residues 65 to 85 (FYLLDFILALVGNTLALWLFI). Topologically, residues 86–92 (RDHKSGT) are cytoplasmic. Residues 93–113 (PANVFLMHLAVADLSCVLVLP) form a helical membrane-spanning segment. Over 114 to 133 (TRLVYHFSGNHWPFGEIACR) the chain is Extracellular. Cys-132 and Cys-209 are oxidised to a cystine. The helical transmembrane segment at 134 to 154 (LTGFLFYLNMYASIYFLTCIS) threads the bilayer. Over 155–175 (ADRFLAIVHPVKSLKLRRPLY) the chain is Cytoplasmic. Residues 176-196 (AHLACAFLWVVVAVAMAPLLV) traverse the membrane as a helical segment. The Extracellular segment spans residues 197 to 223 (SPQTVQTNHTVVCLQLYREKASHHALV). N-linked (GlcNAc...) asparagine glycosylation occurs at Asn-204. A helical transmembrane segment spans residues 224–244 (SLAVAFTFPFITTVTCYLLII). At 245–260 (RSLRQGLRVEKRLKTK) the chain is on the cytoplasmic side. Residues 261–281 (AVRMIAIVLAIFLVCFVPYHV) traverse the membrane as a helical segment. Residue Asn-282 is glycosylated (N-linked (GlcNAc...) asparagine). Over 282–308 (NRSVYVLHYRSHGASCATQRILALANR) the chain is Extracellular. A helical transmembrane segment spans residues 309-329 (ITSCLTSLNGALDPIMYFFVA). Residues 330–367 (EKFRHALCNLLCGKRLKGPPPSFEGKTNESSLSAKSEL) are Cytoplasmic-facing.

Belongs to the G-protein coupled receptor 1 family. Expressed in brain, kidney, heart and umbilical vein endothelial cells. Highest level in brain.

Its subcellular location is the cell membrane. Dual specificity receptor for uracil nucleotides and cysteinyl leukotrienes (CysLTs). Signals through G(i) and inhibition of adenylyl cyclase. May mediate brain damage by nucleotides and CysLTs following ischemia. The protein is Uracil nucleotide/cysteinyl leukotriene receptor (GPR17) of Homo sapiens (Human).